The primary structure comprises 389 residues: 11-beta-hydroxysteroid dehydrogenase-like 5 (389 aa).

A helical; Signal-anchor for type II membrane protein membrane pass occupies residues 11–31; sequence LVAPPATMVVMAFAWPLLSFI. NADP(+)-binding positions include 56–82 and Asp107; that span reads GASS…VARR. Ser186 provides a ligand contact to substrate. Tyr199 functions as the Proton acceptor in the catalytic mechanism. NADP(+) contacts are provided by residues 199 to 203 and Lys203; that span reads YSAAK. Residues 337–381 form a disordered region; it reads LMLEGGPPRVPASPPRYTASPPHYTASPPRYPASPPRYPASPPRF. Positions 365-378 are enriched in pro residues; that stretch reads PRYPASPPRYPASP.

This sequence belongs to the short-chain dehydrogenases/reductases (SDR) family.

It is found in the membrane. The polypeptide is 11-beta-hydroxysteroid dehydrogenase-like 5 (HSD5) (Arabidopsis thaliana (Mouse-ear cress)).